The sequence spans 62 residues: Sperm protamine P1 (62 aa).

The tract at residues 1–62 is disordered; it reads MARSRRHSRS…RCSRRRRRRC (62 aa).

Belongs to the protamine P1 family. As to expression, testis.

It is found in the nucleus. The protein resides in the chromosome. In terms of biological role, protamines substitute for histones in the chromatin of sperm during the haploid phase of spermatogenesis. They compact sperm DNA into a highly condensed, stable and inactive complex. The protein is Sperm protamine P1 (PRM1) of Planigale ingrami (Long-tailed planigale).